The following is a 64-amino-acid chain: Large ribosomal subunit protein bL33 (64 aa).

It belongs to the bacterial ribosomal protein bL33 family.

The polypeptide is Large ribosomal subunit protein bL33 (Gloeothece citriformis (strain PCC 7424) (Cyanothece sp. (strain PCC 7424))).